A 106-amino-acid chain; its full sequence is Large ribosomal subunit protein uL24 (106 aa).

Positions 69–106 are disordered; that stretch reads SNLNPVDPKTGKATRVGRKVSSEGTLVRYSKKSGEEIK.

Belongs to the universal ribosomal protein uL24 family. Part of the 50S ribosomal subunit.

Its function is as follows. One of two assembly initiator proteins, it binds directly to the 5'-end of the 23S rRNA, where it nucleates assembly of the 50S subunit. One of the proteins that surrounds the polypeptide exit tunnel on the outside of the subunit. The protein is Large ribosomal subunit protein uL24 of Bacteroides fragilis (strain ATCC 25285 / DSM 2151 / CCUG 4856 / JCM 11019 / LMG 10263 / NCTC 9343 / Onslow / VPI 2553 / EN-2).